The chain runs to 1552 residues: Nonribosomal peptide synthetase acrB (1552 aa).

The interval 129 to 564 (ASFAQERIWF…PVANLAIFDE (436 aa)) is condensation. The segment at 594 to 999 (RHCKAHPRDV…RMEGSAQVKI (406 aa)) is adenylation. Residues 1110–1186 (APLGVEEEVM…AMARLLQPQE (77 aa)) enclose the Carrier domain. Serine 1146 carries the O-(pantetheine 4'-phosphoryl)serine modification. The interval 1226–1464 (LTGATGFLGR…DFVGVDAVAS (239 aa)) is thiolester reductase (R) domain.

It belongs to the NRP synthetase family.

It participates in secondary metabolite biosynthesis. Its function is as follows. Nonribosomal peptide synthetase; part of the cluster that mediates the biosynthesis of acurin A, a highly reduced polyketide coupled to a serine via a peptide bond. The activities of the highly reducing polyketide synthase acrA and the nonribosomal peptide synthetase acrB are collectively responsible for the synthesis of the acurin A core structure with a heptaketide backbone produced by acrA covalently fused to a L-serine by acrB. After the formation of the PK-NRP hybrid product, it is detached from acrB by reductive release to set up the formation of the lactam ring by aldol condensation. The hydrolyase acrC then catalyzes water loss to generate a double bond in the ring. This double bond is probably reduced, which is followed by three oxidations at C-22 to generate the carboxylic acid moiety, involving probably the FAD-binding monooxygenase acrE and the cytochrome P450 monooxygenases acrD and acrF. Finally, a last methylation step performed by the O-methyltransferase acrG leads to the production of acurin A. In Aspergillus aculeatus (strain ATCC 16872 / CBS 172.66 / WB 5094), this protein is Nonribosomal peptide synthetase acrB.